The sequence spans 115 residues: MLFSSLLCVFVAFSYSGSSVAQKVTQAQSSVSMPVRKAVTLNCLYETSWWSYYIFWYKQLPSKEMIFLIRQGSDEQNAKSGRYSVNFKKAAKSVALTISALQLEDSAKYFCALGE.

The N-terminal stretch at 1 to 21 (MLFSSLLCVFVAFSYSGSSVA) is a signal peptide. An Ig-like domain is found at 22 to 115 (QKVTQAQSSV…SAKYFCALGE (94 aa)). A disulfide bridge links C43 with C111.

As to quaternary structure, gamma-delta TR is a heterodimer composed of a gamma and delta chain; disulfide-linked. The gamma-delta TR is associated with the transmembrane signaling CD3 coreceptor proteins following the stoichiometry: a single gamma-delta TR heterodimer associates with one CD3D-CD3E heterodimer, one CD3G-CD3E heterodimer and one CD247 homodimer forming a stable octameric structure. Upon activation, gamma-delta TR complex associates with FCER1G to initiate intracellular signaling.

The protein localises to the cell membrane. In terms of biological role, v region of the variable domain of T cell receptor (TR) delta chain that participates in the antigen recognition. Gamma-delta TRs recognize a variety of self and foreign non-peptide antigens frequently expressed at the epithelial boundaries between the host and external environment, including endogenous lipids presented by MH-like protein CD1D and phosphoantigens presented by butyrophilin-like molecule BTN3A1. Upon antigen recognition induces rapid, innate-like immune responses involved in pathogen clearance and tissue repair. Binding of gamma-delta TR complex to antigen triggers phosphorylation of immunoreceptor tyrosine-based activation motifs (ITAMs) in the CD3 chains by the LCK and FYN kinases, allowing the recruitment, phosphorylation, and activation of ZAP70 that facilitates phosphorylation of the scaffolding proteins LCP2 and LAT. This lead to the formation of a supramolecular signalosome that recruits the phospholipase PLCG1, resulting in calcium mobilization and ERK activation, ultimately leading to T cell expansion and differentiation into effector cells. Gamma-delta TRs are produced through somatic rearrangement of a limited repertoire of variable (V), diversity (D), and joining (J) genes. The potential diversity of gamma-delta TRs is conferred by the unique ability to rearrange (D) genes in tandem and to utilize all three reading frames. The combinatorial diversity is considerably increased by the sequence exonuclease trimming and random nucleotide (N) region additions which occur during the V-(D)-J rearrangements. This is T cell receptor delta variable 1 from Homo sapiens (Human).